Consider the following 886-residue polypeptide: Vam6/Vps39-like protein (886 aa).

A CNH domain is found at 15 to 294; the sequence is PLQIDCLAAW…RFITSGGSNI (280 aa). The stretch at 573 to 750 is one CHCR repeat; it reads FTEDLPEVES…LLRMYLSPPS (178 aa).

Belongs to the VAM6/VPS39 family. In terms of assembly, homooligomer. Interacts with TGFBR2 and, less efficiently, with TGFBR1; interaction with TGFBR2 is independent of the receptor kinase activity and of the presence of TGF-beta. Also interacts with ACVR2B, but not with BMPR2. Interacts with SMAD4, preferentially following TGF-beta treatment. Component of the putative homotypic fusion and vacuole protein sorting (HOPS) complex; the core of which composed of the class C Vps proteins VPS11, VPS16, VPS18 and VPS33A, is associated with VPS39 and VPS41. Interacts with PLEKHM2; involved in VPS39 recruitment to ARL8B-containing lysosomes. Associates with adapter protein complex 3 (AP-3) and clathrin:AP-3 complexes. Interacts with STX17; this interaction is increased in the absence of TMEM39A. Interacts with RAB7, RAB2A and RAB2B. Interacts with RAB2A (GTP-bound); the interaction contributes to obtaining a functional HOPS complex that promotes autophagosome-lysosome membrane fusion driven by STX17-SNAP29-VAMP8. Interacts with RAB39A (GTP-bound) and RAB39B (GTP-bound); interaction with RAB39A contributes to obtaining a functional HOPS complex.

It is found in the cytoplasm. It localises to the lysosome membrane. The protein resides in the late endosome membrane. Its function is as follows. Regulator of TGF-beta/activin signaling, inhibiting SMAD3- and activating SMAD2-dependent transcription. Acts by interfering with SMAD3/SMAD4 complex formation, this would lead to inhibition of SMAD3-dependent transcription and relieve SMAD3 inhibition of SMAD2-dependent promoters, thus increasing SMAD2-dependent transcription. Functionally, plays a role in vesicle-mediated protein trafficking to lysosomal compartments including the endocytic membrane transport and autophagic pathways. Acts as a component of the HOPS endosomal tethering complex which is proposed to be involved in the Rab5-to-Rab7 endosome conversion probably implicating MON1A/B, and via binding SNAREs and SNARE complexes to mediate tethering and docking events during SNARE-mediated membrane fusion. The HOPS complex is proposed to be recruited to Rab7 on the late endosomal membrane and to regulate late endocytic, phagocytic and autophagic traffic towards lysosomes. Involved in homotypic vesicle fusions between late endosomes and in heterotypic fusions between late endosomes and lysosomes. Required for fusion of endosomes and autophagosomes with lysosomes. This Mus musculus (Mouse) protein is Vam6/Vps39-like protein.